A 67-amino-acid chain; its full sequence is Large ribosomal subunit protein bL35 (67 aa).

It belongs to the bacterial ribosomal protein bL35 family.

This Leptospira interrogans serogroup Icterohaemorrhagiae serovar Lai (strain 56601) protein is Large ribosomal subunit protein bL35.